Consider the following 135-residue polypeptide: Small ribosomal subunit protein uS8 (135 aa).

It belongs to the universal ribosomal protein uS8 family. As to quaternary structure, part of the 30S ribosomal subunit. Contacts proteins S5 and S12.

Functionally, one of the primary rRNA binding proteins, it binds directly to 16S rRNA central domain where it helps coordinate assembly of the platform of the 30S subunit. The polypeptide is Small ribosomal subunit protein uS8 (Nocardioides sp. (strain ATCC BAA-499 / JS614)).